Consider the following 156-residue polypeptide: MHYQEQMESLMLGEERRRGNYTRDVDADADEGVNSPSSFPNSPDDSDRRSSSSSSRRGLSKHYKGKSQSFTTLAEALTVEDLAKPENPFNAKLKQRRESPHCRRLSGCGGASERNLSVHDVFLAGNDRPPRLSGNRPPPRAQTLSAAHISALLTRT.

Residues 1–67 form a disordered region; that stretch reads MHYQEQMESL…GLSKHYKGKS (67 aa). Residues 13–26 are compositionally biased toward basic and acidic residues; it reads GEERRRGNYTRDVD.

It is found in the nucleus. Functionally, promotes slightly the tolerance to oxidizing chemicals (e.g. diamide). The chain is Protein OXIDATIVE STRESS 3 LIKE 3 from Arabidopsis thaliana (Mouse-ear cress).